The primary structure comprises 299 residues: Tyrosine recombinase XerC (299 aa).

Residues M1–N85 enclose the Core-binding (CB) domain. Positions R106–D285 constitute a Tyr recombinase domain. Catalysis depends on residues R146, K170, H237, R240, and H263. The active-site O-(3'-phospho-DNA)-tyrosine intermediate is Y272.

This sequence belongs to the 'phage' integrase family. XerC subfamily. Forms a cyclic heterotetrameric complex composed of two molecules of XerC and two molecules of XerD.

The protein resides in the cytoplasm. Site-specific tyrosine recombinase, which acts by catalyzing the cutting and rejoining of the recombining DNA molecules. The XerC-XerD complex is essential to convert dimers of the bacterial chromosome into monomers to permit their segregation at cell division. It also contributes to the segregational stability of plasmids. The polypeptide is Tyrosine recombinase XerC (Pseudomonas fluorescens (strain Pf0-1)).